The chain runs to 274 residues: Large ribosomal subunit protein uL2 (274 aa).

The tract at residues 224–254 (AMNPVDHPHGGGEGRTGEGQAPVSPWNTLTK) is disordered. A compositionally biased stretch (basic and acidic residues) spans 229–239 (DHPHGGGEGRT).

Belongs to the universal ribosomal protein uL2 family. As to quaternary structure, part of the 50S ribosomal subunit. Forms a bridge to the 30S subunit in the 70S ribosome.

One of the primary rRNA binding proteins. Required for association of the 30S and 50S subunits to form the 70S ribosome, for tRNA binding and peptide bond formation. It has been suggested to have peptidyltransferase activity; this is somewhat controversial. Makes several contacts with the 16S rRNA in the 70S ribosome. The chain is Large ribosomal subunit protein uL2 from Leptothrix cholodnii (strain ATCC 51168 / LMG 8142 / SP-6) (Leptothrix discophora (strain SP-6)).